The primary structure comprises 317 residues: Probable deoxyhypusine synthase (317 aa).

K285 (nucleophile) is an active-site residue.

The protein belongs to the deoxyhypusine synthase family. The cofactor is NAD(+).

It carries out the reaction [eIF5A protein]-L-lysine + spermidine = [eIF5A protein]-deoxyhypusine + propane-1,3-diamine. It participates in protein modification; eIF5A hypusination. Catalyzes the NAD-dependent oxidative cleavage of spermidine and the subsequent transfer of the butylamine moiety of spermidine to the epsilon-amino group of a specific lysine residue of the eIF-5A precursor protein to form the intermediate deoxyhypusine residue. The polypeptide is Probable deoxyhypusine synthase (dys) (Methanosarcina thermophila).